A 243-amino-acid chain; its full sequence is Tryptophan synthase alpha chain (243 aa).

Residues Glu-32 and Asp-43 each act as proton acceptor in the active site.

The protein belongs to the TrpA family. As to quaternary structure, tetramer of two alpha and two beta chains.

The protein resides in the plastid. Its subcellular location is the chloroplast. The catalysed reaction is (1S,2R)-1-C-(indol-3-yl)glycerol 3-phosphate + L-serine = D-glyceraldehyde 3-phosphate + L-tryptophan + H2O. Its pathway is amino-acid biosynthesis; L-tryptophan biosynthesis; L-tryptophan from chorismate: step 5/5. Its function is as follows. The alpha subunit is responsible for the aldol cleavage of indoleglycerol phosphate to indole and glyceraldehyde 3-phosphate. The sequence is that of Tryptophan synthase alpha chain from Cyanidioschyzon merolae (strain NIES-3377 / 10D) (Unicellular red alga).